A 352-amino-acid chain; its full sequence is PDZ and LIM domain protein 2 (352 aa).

The region spanning 1–84 (MALTVDVAGP…PLRLQLDRSQ (84 aa)) is the PDZ domain. Disordered regions lie at residues 69–95 (IRQS…NGDS) and 108–141 (VRTH…PPPF). Over residues 81 to 95 (DRSQAASPGQTNGDS) the composition is skewed to polar residues. Over residues 117 to 135 (SLRSSYSSPTSLSPRAGSP) the composition is skewed to low complexity. Ser124 is modified (phosphoserine). The residue at position 126 (Thr126) is a Phosphothreonine. 10 positions are modified to phosphoserine: Ser127, Ser129, Ser134, Ser137, Ser143, Ser161, Ser197, Ser203, Ser213, and Ser266. Disordered regions lie at residues 170 to 214 (LSYS…GGSL) and 253 to 275 (ERGG…PASR). The segment covering 258-275 (PAFLPSSLSPQSSLPASR) has biased composition (low complexity). In terms of domain architecture, LIM zinc-binding spans 284 to 344 (HTCEKCSTSI…EKHARQRYSA (61 aa)).

Interacts with alpha-actinins ACTN1 and ACTN4, FLNA and MYH9. Interacts (via LIM zinc-binding domain) with MKRN2.

Its subcellular location is the cytoplasm. It localises to the cytoskeleton. In terms of biological role, probable adapter protein located at the actin cytoskeleton that promotes cell attachment. Necessary for the migratory capacity of epithelial cells. Overexpression enhances cell adhesion to collagen and fibronectin and suppresses anchorage independent growth. May contribute to tumor cell migratory capacity. This Macaca fascicularis (Crab-eating macaque) protein is PDZ and LIM domain protein 2 (PDLIM2).